The primary structure comprises 274 residues: MAIHLYKTSTPSTRNRAVDSQVKSNPRNNLIYGQHRCGKGRNARGIITAGHRGGGHKRLYRKIDFRRNEKDIYGRIVTIEYDPNRNAYICLIHYGDGEKRYILHPRGAIIGDTIVSGTEVPIKMGNALPLTDMPLGTAIHNIEITLGKGGQLARAAGAVAKLIAKEGKSATLKLPSGEVRLISKNCSATVGQVGNVGVNQKSLGRAGSKCWLGKRPVVRGVVMNPVDHPHGGGEGRAPIGRKKPTTPWGYPALGRRSRKRNKYSDNLILRRRSK.

Disordered stretches follow at residues 1-23 (MAIH…SQVK) and 224-274 (NPVD…RRSK).

Belongs to the universal ribosomal protein uL2 family. In terms of assembly, part of the 50S ribosomal subunit.

It localises to the plastid. The protein resides in the chloroplast. In Vitis vinifera (Grape), this protein is Large ribosomal subunit protein uL2cz/uL2cy (rpl2-A).